The following is a 105-amino-acid chain: Heat shock protein HspQ (105 aa).

The protein belongs to the HspQ family.

The protein resides in the cytoplasm. Involved in the degradation of certain denaturated proteins, including DnaA, during heat shock stress. The polypeptide is Heat shock protein HspQ (Sodalis glossinidius (strain morsitans)).